The following is an 848-amino-acid chain: Neurofilament medium polypeptide (848 aa).

The span at 1 to 10 (MSYTLDSLGN) shows a compositional bias: polar residues. The tract at residues 1 to 51 (MSYTLDSLGNPSAYRRVTETRSSFSRVSGSPSSGFRSQSWSRGSPSTVSSS) is disordered. Ser2 is modified (N-acetylserine). The interval 2 to 102 (SYTLDSLGNP…KLSRSNEKEQ (101 aa)) is head. Positions 21 to 44 (RSSFSRVSGSPSSGFRSQSWSRGS) are enriched in low complexity. A Phosphoserine modification is found at Ser30. Omega-N-methylarginine is present on Arg42. Thr47 carries an O-linked (GlcNAc) threonine glycan. Ser97 is subject to Phosphoserine. In terms of domain architecture, IF rod spans 99 to 410 (EKEQLQGLND…KLLEGEETRF (312 aa)). The coil 1A stretch occupies residues 103 to 134 (LQGLNDRFAGYIEKVHYLEQQNKEIEAEIQAL). A linker 1 region spans residues 135–147 (RQKQASHAQLGDA). A coil 1B region spans residues 148–246 (YDQEIRELRA…EEEVADLLAQ (99 aa)). Phosphoserine is present on Ser224. A linker 12 region spans residues 247-263 (IQASHITVERKDYLKTD). Residues 264–285 (ISTALKEIRSQLECHSDQNMHQ) are coil 2A. The linker 2 stretch occupies residues 286–289 (AEEW). The coil 2B stretch occupies residues 290 to 410 (FKCRYAKLTE…KLLEGEETRF (121 aa)). A Phosphotyrosine modification is found at Tyr318. Ser344, Ser416, and Ser428 each carry phosphoserine. Residues 411–848 (STFSGSITGP…AIVKEVTQGD (438 aa)) form a tail region. O-linked (GlcNAc) threonine glycosylation occurs at Thr430. 2 positions are modified to phosphoserine: Ser466 and Ser482. The tract at residues 482–785 (SAKEEKEEAE…GEDSSDDKVV (304 aa)) is disordered. Residues 488–498 (EEAEEKEEEPE) are compositionally biased toward acidic residues. Residues 499 to 509 (AEKSPVKSPEA) show a composition bias toward basic and acidic residues. Phosphoserine occurs at positions 502 and 506. Acidic residues predominate over residues 510 to 533 (KEEEEEGEKEEEEEGQEEEEEEDE). Positions 534 to 553 (GVKSDQAEEGGSEKEGSSEK) are enriched in basic and acidic residues. Phosphoserine is present on residues Ser537, Ser545, Ser550, and Ser551. The span at 554 to 576 (DEGEQEEEEGETEAEGEGEEAEA) shows a compositional bias: acidic residues. Thr565 carries the post-translational modification Phosphothreonine. The segment covering 577–604 (KEEKKIEGKVEEVAVKEEIKVEKPEKAK) has biased composition (basic and acidic residues). A phosphoserine mark is found at Ser605 and Ser610. Basic and acidic residues-rich tracts occupy residues 611 to 677 (PVEE…KAVE) and 689 to 711 (SLEK…KAEE). Phosphothreonine is present on Thr642. Phosphoserine is present on residues Ser645, Ser669, Ser689, Ser715, Ser723, Ser753, and Ser769. Basic and acidic residues-rich tracts occupy residues 720 to 732 (SDRS…KEDI) and 748 to 760 (TQEK…EEKG). A compositionally biased stretch (basic and acidic residues) spans 771 to 785 (AEEKKGEDSSDDKVV).

Belongs to the intermediate filament family. As to quaternary structure, forms heterodimers with NEFL; which can further hetero-oligomerize (in vitro). Forms heterodimers with INA (in vitro). In terms of processing, there are a number of repeats of the tripeptide K-S-P, NFM is phosphorylated on a number of the serines in this motif. It is thought that phosphorylation of NFM results in the formation of interfilament cross bridges that are important in the maintenance of axonal caliber. Phosphorylation seems to play a major role in the functioning of the larger neurofilament polypeptides (NF-M and NF-H), the levels of phosphorylation being altered developmentally and coincidentally with a change in the neurofilament function. Post-translationally, phosphorylated in the head and rod regions by the PKC kinase PKN1, leading to the inhibition of polymerization. Expressed in the sciatic nerve (at protein level).

It localises to the cytoplasm. The protein localises to the cytoskeleton. It is found in the cell projection. Its subcellular location is the axon. Functionally, neurofilaments usually contain three intermediate filament proteins: NEFL, NEFM, and NEFH which are involved in the maintenance of neuronal caliber. May additionally cooperate with the neuronal intermediate filament proteins PRPH and INA to form neuronal filamentous networks. The protein is Neurofilament medium polypeptide (Nefm) of Mus musculus (Mouse).